The following is a 496-amino-acid chain: Probable malate:quinone oxidoreductase (496 aa).

It belongs to the MQO family. The cofactor is FAD.

The catalysed reaction is (S)-malate + a quinone = a quinol + oxaloacetate. Its pathway is carbohydrate metabolism; tricarboxylic acid cycle; oxaloacetate from (S)-malate (quinone route): step 1/1. The protein is Probable malate:quinone oxidoreductase of Prochlorococcus marinus (strain MIT 9303).